The primary structure comprises 145 residues: Large ribosomal subunit protein uL15 (145 aa).

The span at 1-11 (MELHSLKSTPG) shows a compositional bias: polar residues. The segment at 1–48 (MELHSLKSTPGSRKEKHRKGRGHAAGKGKQAGKGQSGQRKRSKVRLGF) is disordered. The segment covering 14 to 26 (KEKHRKGRGHAAG) has biased composition (basic residues).

Belongs to the universal ribosomal protein uL15 family. In terms of assembly, part of the 50S ribosomal subunit.

In terms of biological role, binds to the 23S rRNA. This Mycoplasmopsis pulmonis (strain UAB CTIP) (Mycoplasma pulmonis) protein is Large ribosomal subunit protein uL15.